Here is a 178-residue protein sequence, read N- to C-terminus: Large ribosomal subunit protein uL6 (178 aa).

Belongs to the universal ribosomal protein uL6 family. Part of the 50S ribosomal subunit.

In terms of biological role, this protein binds to the 23S rRNA, and is important in its secondary structure. It is located near the subunit interface in the base of the L7/L12 stalk, and near the tRNA binding site of the peptidyltransferase center. In Helicobacter hepaticus (strain ATCC 51449 / 3B1), this protein is Large ribosomal subunit protein uL6.